A 527-amino-acid chain; its full sequence is Sensory neuron membrane protein 1 (527 aa).

Residues 1–10 (MQLQKPLKIG) are Cytoplasmic-facing. The chain crosses the membrane as a helical span at residues 11–31 (LGMMGAGLFGIIFGWVLFPVI). Residues 32-456 (LKSQLKKEMA…LKNQLFIPKR (425 aa)) are Extracellular-facing. Asn67 and Asn229 each carry an N-linked (GlcNAc...) asparagine glycan. 3 disulfides stabilise this stretch: Cys268/Cys333, Cys297/Cys352, and Cys335/Cys341. N-linked (GlcNAc...) asparagine glycosylation is present at Asn440. A helical membrane pass occupies residues 457 to 477 (IVSVVKWLLAGVGFVGLVGSL). Residues 478 to 527 (VYQFKGKMINFALSPSSAQVTKVNPEINQQNQPKDISIIGESQNPPKVDM) are Cytoplasmic-facing.

This sequence belongs to the CD36 family. Detected in both male and female antennal tissues. Expression is two to three fold higher in male compared to female antenna.

It localises to the cell membrane. Plays an olfactory role that is not restricted to pheromone sensitivity. The chain is Sensory neuron membrane protein 1 from Ostrinia furnacalis (Asian corn borer).